Reading from the N-terminus, the 206-residue chain is Cytochrome c oxidase subunit 3 (206 aa).

The next 5 membrane-spanning stretches (helical) occupy residues 26–46 (FLGF…FFGT), 68–88 (LVFI…LAMF), 97–117 (AMMI…GFEI), 143–163 (LVGL…VLLI), and 185–205 (WHFI…MGVG).

This sequence belongs to the cytochrome c oxidase subunit 3 family.

The protein localises to the cell membrane. It carries out the reaction 4 Fe(II)-[cytochrome c] + O2 + 8 H(+)(in) = 4 Fe(III)-[cytochrome c] + 2 H2O + 4 H(+)(out). The sequence is that of Cytochrome c oxidase subunit 3 (ctaE) from Alkalihalophilus pseudofirmus (strain ATCC BAA-2126 / JCM 17055 / OF4) (Bacillus pseudofirmus).